Here is a 790-residue protein sequence, read N- to C-terminus: Aryl hydrocarbon receptor nuclear translocator (790 aa).

The segment covering 1–10 (MAATTANPEM) has biased composition (polar residues). Residues 1–96 (MAATTANPEM…ERLARENHSE (96 aa)) form a disordered region. A2 is modified (N-acetylalanine). The span at 26–35 (PGPGIQGGGA) shows a compositional bias: gly residues. Residue K58 forms a Glycyl lysine isopeptide (Lys-Gly) (interchain with G-Cter in SUMO2) linkage. The segment covering 60 to 96 (LRCDDDQMSNDKERFARSDDEQSSADKERLARENHSE) has biased composition (basic and acidic residues). S77 bears the Phosphoserine mark. The tract at residues 88–128 (RLARENHSEIERRRRNKMTAYITELSDMVPTCSALARKPDK) is DNA-binding. The bHLH domain maps to 89-142 (LARENHSEIERRRRNKMTAYITELSDMVPTCSALARKPDKLTILRMAVSHMKSL). Positions 112–168 (LSDMVPTCSALARKPDKLTILRMAVSHMKSLRGTGNTSTDGTYKPSFLTDQELKHLI) are required for heterodimer formation with HIF1A. The required for heterodimer formation with EPAS1 stretch occupies residues 112–264 (LSDMVPTCSA…MCMGSRRSFI (153 aa)). PAS domains lie at 161-235 (DQEL…LTGR) and 349-419 (PNCT…VKLK). The interval 167 to 171 (LILEA) is mediates the transcription activity and dimerization of the AHR:ARNT complex. Residues 424 to 467 (SVMFRFRSKNREWLWVRTSSFTFQNPYSDEIEYIICTNTNVKNS) enclose the PAC domain. 3 stretches are compositionally biased toward polar residues: residues 465-490 (KNSS…TANL), 520-537 (TSCN…TTGP), and 661-679 (TRSS…SFSP). Disordered regions lie at residues 465–492 (KNSS…NLSL), 514–543 (PGRD…SKPL), 661–716 (TRSS…AGQF), and 728–790 (PQWQ…SFSE). Positions 683–697 (PGASTASPGAAAYPS) are enriched in low complexity. Residues 741 to 755 (SNEQHVQQPSAQQPG) show a composition bias toward polar residues.

As to quaternary structure, monomer. Homodimer only upon binding to a DNA. Efficient DNA binding requires dimerization with another bHLH protein. Interacts with TACC3. Interacts with HIF1A, EPAS1, NPAS1 and NPAS3; forms a heterodimer that binds core DNA sequence 5'-TACGTG-3' within the hypoxia response element (HRE) of target gene promoters. Forms a heterodimer with AHRR, as well as with other bHLH proteins. Interacts with NOCA7. Interacts with TACC3. Interacts with AHR; the heterodimer ARNT:AHR binds to core DNA sequence 5'-TGCGTG-3' within the dioxin response element (DRE) of target gene promoters and activates their transcription. Interacts with SIM1 and NPAS4.

It localises to the nucleus. Its function is as follows. Required for activity of the AHR. Upon ligand binding, AHR translocates into the nucleus, where it heterodimerizes with ARNT and induces transcription by binding to xenobiotic response elements (XRE). Not required for the ligand-binding subunit to translocate from the cytosol to the nucleus after ligand binding. The complex initiates transcription of genes involved in the regulation of a variety of biological processes, including angiogenesis, hematopoiesis, drug and lipid metabolism, cell motility and immune modulation. The heterodimer binds to core DNA sequence 5'-TACGTG-3' within the hypoxia response element (HRE) of target gene promoters and functions as a transcriptional regulator of the adaptive response to hypoxia. The heterodimer ARNT:AHR binds to core DNA sequence 5'-TGCGTG-3' within the dioxin response element (DRE) of target gene promoters and activates their transcription. The sequence is that of Aryl hydrocarbon receptor nuclear translocator (ARNT) from Bos taurus (Bovine).